Consider the following 62-residue polypeptide: MEQRKCYFCGKMLEPGTGKLYVKKDGSTYFMCSSKCMSNFALGRLPRRTEWTEKGKIQLKKA.

The Zn(2+) site is built by cysteine 6, cysteine 9, cysteine 32, and cysteine 36. The segment at 6 to 36 adopts a C4-type zinc-finger fold; sequence CYFCGKMLEPGTGKLYVKKDGSTYFMCSSKC.

The protein belongs to the eukaryotic ribosomal protein eL24 family. In terms of assembly, part of the 50S ribosomal subunit. Forms a cluster with proteins L3 and L14. The cofactor is Zn(2+).

Binds to the 23S rRNA. The sequence is that of Large ribosomal subunit protein eL24 from Methanosarcina acetivorans (strain ATCC 35395 / DSM 2834 / JCM 12185 / C2A).